Reading from the N-terminus, the 937-residue chain is Bifunctional glutamine synthetase adenylyltransferase/adenylyl-removing enzyme (937 aa).

The tract at residues 1-436 is adenylyl removase; it reads MSQPIPSASP…AAEFAELLAP (436 aa). The adenylyl transferase stretch occupies residues 443–937; it reads PDTLADYWRA…QLRFQPGKGA (495 aa).

This sequence belongs to the GlnE family. Mg(2+) is required as a cofactor.

The catalysed reaction is [glutamine synthetase]-O(4)-(5'-adenylyl)-L-tyrosine + phosphate = [glutamine synthetase]-L-tyrosine + ADP. The enzyme catalyses [glutamine synthetase]-L-tyrosine + ATP = [glutamine synthetase]-O(4)-(5'-adenylyl)-L-tyrosine + diphosphate. Involved in the regulation of glutamine synthetase GlnA, a key enzyme in the process to assimilate ammonia. When cellular nitrogen levels are high, the C-terminal adenylyl transferase (AT) inactivates GlnA by covalent transfer of an adenylyl group from ATP to specific tyrosine residue of GlnA, thus reducing its activity. Conversely, when nitrogen levels are low, the N-terminal adenylyl removase (AR) activates GlnA by removing the adenylyl group by phosphorolysis, increasing its activity. The regulatory region of GlnE binds the signal transduction protein PII (GlnB) which indicates the nitrogen status of the cell. The protein is Bifunctional glutamine synthetase adenylyltransferase/adenylyl-removing enzyme of Xanthomonas campestris pv. campestris (strain ATCC 33913 / DSM 3586 / NCPPB 528 / LMG 568 / P 25).